A 291-amino-acid chain; its full sequence is MPSLKDLKNRIESVKSTRKITKAMQMVAAAKLRRAQEAAEQSRPYTERFNAVMAGLAASVGGSDSAPKLLSGTGSDKVQLLIVMTSERGLCGGFNTNIAKLARAHAQKLQGEGKDVKILTVGKKGRDQLKRDLGSLFIGHVDLTEIKRVSYVDAQGIAKDVLNRFDVGEFDVATIFYAKFVNVVSQIPTAQQIIPAKFEQQEGEEASTLFDYEPDEEAILADLLPRGVATQIFSALLENGASEQGARMSAMDNATRNAGEMIENLTIEFNRSRQAVITNELIEIISGAEAL.

Belongs to the ATPase gamma chain family. In terms of assembly, F-type ATPases have 2 components, CF(1) - the catalytic core - and CF(0) - the membrane proton channel. CF(1) has five subunits: alpha(3), beta(3), gamma(1), delta(1), epsilon(1). CF(0) has three main subunits: a, b and c.

It localises to the cell inner membrane. Its function is as follows. Produces ATP from ADP in the presence of a proton gradient across the membrane. The gamma chain is believed to be important in regulating ATPase activity and the flow of protons through the CF(0) complex. This Roseobacter denitrificans (strain ATCC 33942 / OCh 114) (Erythrobacter sp. (strain OCh 114)) protein is ATP synthase gamma chain.